Consider the following 397-residue polypeptide: Tryptophan synthase beta chain (397 aa).

K90 is modified (N6-(pyridoxal phosphate)lysine).

It belongs to the TrpB family. Tetramer of two alpha and two beta chains. Pyridoxal 5'-phosphate serves as cofactor.

The catalysed reaction is (1S,2R)-1-C-(indol-3-yl)glycerol 3-phosphate + L-serine = D-glyceraldehyde 3-phosphate + L-tryptophan + H2O. It functions in the pathway amino-acid biosynthesis; L-tryptophan biosynthesis; L-tryptophan from chorismate: step 5/5. Functionally, the beta subunit is responsible for the synthesis of L-tryptophan from indole and L-serine. The chain is Tryptophan synthase beta chain from Nitrosomonas europaea (strain ATCC 19718 / CIP 103999 / KCTC 2705 / NBRC 14298).